The chain runs to 579 residues: XK-related protein 7 (579 aa).

Low complexity predominate over residues 1–18 (MAAKSDGAAASAGPDPEG). The interval 1–40 (MAAKSDGAAASAGPDPEGAAGGARGSAGGRGEAAAAAGPP) is disordered. Residues 19–31 (AAGGARGSAGGRG) show a composition bias toward gly residues. 2 helical membrane-spanning segments follow: residues 59-79 (WVLC…WLAA) and 89-109 (YFSL…LLSF). Residues 146–165 (GAFRTKEGSPEPGPQPAPSS) form a disordered region. 5 consecutive transmembrane segments (helical) span residues 260–280 (LLPA…LASY), 314–334 (GLAF…CIVG), 355–375 (GEEI…WFNV), 384–404 (MTLY…FWYS), and 415–435 (LIMV…MCVY). A disordered region spans residues 466 to 510 (ADAITSPPRSLPRTTGAERDGASAGERAGTPTPPVFQVRPGLPPT).

The protein belongs to the XK family.

It is found in the cell membrane. This Pan troglodytes (Chimpanzee) protein is XK-related protein 7 (XKR7).